A 262-amino-acid chain; its full sequence is Serine/arginine-rich SC35-like splicing factor SCL30 (262 aa).

Residues 1–14 are compositionally biased toward low complexity; that stretch reads MRRYSPPYYSPPRR. 2 disordered regions span residues 1–48 and 123–262; these read MRRY…SHGS and ASES…VSPR. A phosphoserine mark is found at S5, S10, and S22. A compositionally biased stretch (gly residues) spans 31–42; it reads GYGGGGGGGGRR. The region spanning 47–125 is the RRM domain; sequence GSLLVRNIPL…REITVVVASE (79 aa). Over residues 125-152 the composition is skewed to basic and acidic residues; the sequence is ESRKRPEEMRVKTRTRSREPSGSRDRSH. The span at 153-167 shows a compositional bias: basic residues; it reads GRSRSRSISRSRSPR. A phosphoserine mark is found at S182, S204, and S206. Y209 is subject to Phosphotyrosine. Positions 217–239 are enriched in basic and acidic residues; the sequence is PDRDRNGDNEIREKPGYEAEDRR. Over residues 243 to 262 the composition is skewed to low complexity; it reads RAVSRSPSGSRSRSVEVSPR. A phosphoserine mark is found at S254, S256, and S260.

The protein belongs to the splicing factor SR family. SCL subfamily. Component of the spliceosome. Interacts with RS2Z33, CYP59, CYP63 and CYP95. In terms of processing, phosphorylated.

It localises to the nucleus speckle. Functionally, involved in intron recognition and spliceosome assembly. Probably active at the 5' splice sites. In Arabidopsis thaliana (Mouse-ear cress), this protein is Serine/arginine-rich SC35-like splicing factor SCL30 (SCL30).